Here is a 258-residue protein sequence, read N- to C-terminus: 5'-nucleotidase SurE (258 aa).

Positions 18, 19, 49, and 102 each coordinate a divalent metal cation.

It belongs to the SurE nucleotidase family. A divalent metal cation serves as cofactor.

It localises to the cytoplasm. It carries out the reaction a ribonucleoside 5'-phosphate + H2O = a ribonucleoside + phosphate. Functionally, nucleotidase that shows phosphatase activity on nucleoside 5'-monophosphates. This chain is 5'-nucleotidase SurE, found in Vibrio parahaemolyticus serotype O3:K6 (strain RIMD 2210633).